An 814-amino-acid polypeptide reads, in one-letter code: Rho GTPase-activating protein 44 (814 aa).

In terms of domain architecture, BAR spans 14–249 (QTVGRAEKTE…IKAQQEAWVE (236 aa)). The Rho-GAP domain occupies 255–445 (KPLEEHLMIS…PIIQHADWFF (191 aa)). Disordered regions lie at residues 467–493 (ANYSSMPSPDMDPADRRQPEQARRPLS), 531–768 (SAGR…SMST), and 784–814 (STLRLSPLEHARRHSVTDKRDSEEESESTAL). Residues 479–489 (PADRRQPEQAR) are compositionally biased toward basic and acidic residues. Ser-493 is modified (phosphoserine). Composition is skewed to low complexity over residues 531–541 (SAGRKAACAPP), 567–581 (SPATPAPALSPSGAS), 598–612 (SPGSGQKGSPGSIQG), 622–637 (PQPAASPSQLPADQSP), 684–704 (SPYGLSYPPGYSMASGQLSPA), and 741–752 (SVSLSASSPQST). The tract at residues 727–814 (KPRQRPTLPP…SEEESESTAL (88 aa)) is interaction with BST2. Basic and acidic residues predominate over residues 790-805 (PLEHARRHSVTDKRDS). The residue at position 805 (Ser-805) is a Phosphoserine. Positions 811–814 (STAL) match the PDZ-binding motif.

In terms of assembly, interacts with BST2 (via cytoplasmic domain). Interacts (probably via PDZ-binding motif) with SHANK3 (via PDZ domain); the interaction takes place in dendritic spines and promotes GRIA1 exocytosis. Expressed in brain, detected at high levels in hippocampal CA1 (at protein level).

The protein localises to the cell projection. It is found in the dendritic spine. It localises to the recycling endosome. Its subcellular location is the presynapse. The protein resides in the dendrite. Functionally, GTPase-activating protein (GAP) that stimulates the GTPase activity of Rho-type GTPases. Thereby, controls Rho-type GTPases cycling between their active GTP-bound and inactive GDP-bound states. Acts as a GAP at least for CDC42 and RAC1. In neurons, is involved in dendritic spine formation and synaptic plasticity in a specific RAC1-GAP activity. Limits the initiation of exploratory dendritic filopodia. Recruited to actin-patches that seed filopodia, binds specifically to plasma membrane sections that are deformed inward by acto-myosin mediated contractile forces. Acts through GAP activity on RAC1 to reduce actin polymerization necessary for filopodia formation. In association with SHANK3, promotes GRIA1 exocytosis from recycling endosomes and spine morphological changes associated to long-term potentiation. This Rattus norvegicus (Rat) protein is Rho GTPase-activating protein 44.